The chain runs to 72 residues: Mitotic-spindle organizing protein 1 (72 aa).

It belongs to the MOZART1 family. In terms of assembly, part of the gamma-tubulin complex.

It is found in the cytoplasm. The protein localises to the cytoskeleton. Its subcellular location is the microtubule organizing center. It localises to the spindle pole body. Functionally, required for gamma-tubulin complex recruitment to the microtubule organizing center (MTOC). This Cryptococcus neoformans var. neoformans serotype D (strain B-3501A) (Filobasidiella neoformans) protein is Mitotic-spindle organizing protein 1.